Here is a 551-residue protein sequence, read N- to C-terminus: Chaperonin GroEL 2 (551 aa).

Residues 30–33 (TLGP), K51, 87–91 (DGTTT), G415, and D496 each bind ATP.

Belongs to the chaperonin (HSP60) family. In terms of assembly, forms a cylinder of 14 subunits composed of two heptameric rings stacked back-to-back. Interacts with the co-chaperonin GroES.

It is found in the cytoplasm. The catalysed reaction is ATP + H2O + a folded polypeptide = ADP + phosphate + an unfolded polypeptide.. In terms of biological role, together with its co-chaperonin GroES, plays an essential role in assisting protein folding. The GroEL-GroES system forms a nano-cage that allows encapsulation of the non-native substrate proteins and provides a physical environment optimized to promote and accelerate protein folding. This chain is Chaperonin GroEL 2, found in Rhodopseudomonas palustris (strain BisB18).